Consider the following 72-residue polypeptide: Cytochrome c oxidase subunit 2 (72 aa).

Over methionine 1–serine 14 the chain is Mitochondrial intermembrane. The chain crosses the membrane as a helical span at residues proline 15 to methionine 45. Residues valine 46–isoleucine 72 lie on the Mitochondrial matrix side of the membrane.

The protein belongs to the cytochrome c oxidase subunit 2 family. As to quaternary structure, component of the cytochrome c oxidase (complex IV, CIV), a multisubunit enzyme composed of 14 subunits. The complex is composed of a catalytic core of 3 subunits MT-CO1, MT-CO2 and MT-CO3, encoded in the mitochondrial DNA, and 11 supernumerary subunits COX4I, COX5A, COX5B, COX6A, COX6B, COX6C, COX7A, COX7B, COX7C, COX8 and NDUFA4, which are encoded in the nuclear genome. The complex exists as a monomer or a dimer and forms supercomplexes (SCs) in the inner mitochondrial membrane with NADH-ubiquinone oxidoreductase (complex I, CI) and ubiquinol-cytochrome c oxidoreductase (cytochrome b-c1 complex, complex III, CIII), resulting in different assemblies (supercomplex SCI(1)III(2)IV(1) and megacomplex MCI(2)III(2)IV(2)). Found in a complex with TMEM177, COA6, COX18, COX20, SCO1 and SCO2. Interacts with TMEM177 in a COX20-dependent manner. Interacts with COX20. Interacts with COX16. Cu cation serves as cofactor.

It is found in the mitochondrion inner membrane. It carries out the reaction 4 Fe(II)-[cytochrome c] + O2 + 8 H(+)(in) = 4 Fe(III)-[cytochrome c] + 2 H2O + 4 H(+)(out). In terms of biological role, component of the cytochrome c oxidase, the last enzyme in the mitochondrial electron transport chain which drives oxidative phosphorylation. The respiratory chain contains 3 multisubunit complexes succinate dehydrogenase (complex II, CII), ubiquinol-cytochrome c oxidoreductase (cytochrome b-c1 complex, complex III, CIII) and cytochrome c oxidase (complex IV, CIV), that cooperate to transfer electrons derived from NADH and succinate to molecular oxygen, creating an electrochemical gradient over the inner membrane that drives transmembrane transport and the ATP synthase. Cytochrome c oxidase is the component of the respiratory chain that catalyzes the reduction of oxygen to water. Electrons originating from reduced cytochrome c in the intermembrane space (IMS) are transferred via the dinuclear copper A center (CU(A)) of subunit 2 and heme A of subunit 1 to the active site in subunit 1, a binuclear center (BNC) formed by heme A3 and copper B (CU(B)). The BNC reduces molecular oxygen to 2 water molecules using 4 electrons from cytochrome c in the IMS and 4 protons from the mitochondrial matrix. This chain is Cytochrome c oxidase subunit 2 (mt-co2), found in Atractosteus spatula (Alligator gar).